The sequence spans 48 residues: Disintegrin accutin (48 aa).

Gln1 is modified (pyrrolidone carboxylic acid). The Disintegrin domain occupies 1–48 (QGAQCTAGPCCWPCKFLKEGTICRRARGDDLDDYCNGISADCPRNPYY). Intrachain disulfides connect Cys5–Cys11, Cys10–Cys35, and Cys23–Cys42. A Cell attachment site motif is present at residues 27–29 (RGD).

It belongs to the venom metalloproteinase (M12B) family. P-II subfamily. P-IIa sub-subfamily. As to quaternary structure, monomer (disintegrin). Expressed by the venom gland.

It is found in the secreted. In terms of biological role, inhibit human platelet aggregation induced by ADP, collagen, thrombin or the thromboxane analog U46619 in platelet suspension with IC(50) values of 66-267 nM. Acts by inhibiting fibrinogen interaction with platelet receptors GPIIb/GPIIIa (ITGA2B/ITGB3). It also inhibits angiogenesis in vivo and in vitro by blocking integrin alpha-V/beta-3 (ITGAV/ITGB3) of endothelial cells and by inducing apoptosis. In Deinagkistrodon acutus (Hundred-pace snake), this protein is Disintegrin accutin.